Reading from the N-terminus, the 103-residue chain is Histone H4 (103 aa).

Positions 1-14 (MTGRGKGGKGLGKG) are enriched in gly residues. Residues 1–20 (MTGRGKGGKGLGKGGAKRHR) form a disordered region. An N-acetylthreonine modification is found at T2. K6 carries the post-translational modification N6-acetyl-N6-methyllysine; alternate. An N6-acetyllysine mark is found at K6, K9, K13, and K17. At K13 the chain carries N6-acetyl-N6-methyllysine; alternate. At K21 the chain carries N6,N6-dimethyllysine. K32 bears the N6-methyllysine mark.

This sequence belongs to the histone H4 family. As to quaternary structure, the nucleosome is a histone octamer containing two molecules each of H2A, H2B, H3 and H4 assembled in one H3-H4 heterotetramer and two H2A-H2B heterodimers. The octamer wraps approximately 147 bp of DNA.

Its subcellular location is the nucleus. The protein localises to the chromosome. In terms of biological role, core component of nucleosome. Nucleosomes wrap and compact DNA into chromatin, limiting DNA accessibility to the cellular machineries which require DNA as a template. Histones thereby play a central role in transcription regulation, DNA repair, DNA replication and chromosomal stability. DNA accessibility is regulated via a complex set of post-translational modifications of histones, also called histone code, and nucleosome remodeling. Its function is as follows. A mixture of histones H2B and H4 has antimicrobial activity against the Gram-positive bacterium M.luteus. The sequence is that of Histone H4 from Penaeus vannamei (Whiteleg shrimp).